The following is a 327-amino-acid chain: 2-keto-3-deoxygluconate permease (327 aa).

Transmembrane regions (helical) follow at residues 10 to 30 (IPGGMMLVPLFLGALCHTFSP), 42 to 62 (GMITGTVPILAVWFFCMGASI), 73 to 93 (KSGTLVVTKIAVAWVVAAIAS), 95 to 115 (IIPEHGVEVGFFAGLSTLALV), 139 to 159 (AGAFVLMSLESGPLMTMIILG), 163 to 183 (IASFEPHVFVGAVLPFLVGFA), 199 to 219 (VQTLIPFFAFALGNTIDLTVI), 224 to 244 (LLGILLGVAVIIVTGIPLIIA), 254 to 274 (TAGIAASSSAGAAVATPVLIA), and 289 to 309 (SLVATAVIVTSILVPIITSIW).

The protein belongs to the KdgT transporter family.

The protein resides in the cell inner membrane. The catalysed reaction is 2-dehydro-3-deoxy-D-gluconate(in) + H(+)(in) = 2-dehydro-3-deoxy-D-gluconate(out) + H(+)(out). Functionally, catalyzes the proton-dependent uptake of 2-keto-3-deoxygluconate (KDG) into the cell. The sequence is that of 2-keto-3-deoxygluconate permease from Escherichia coli O139:H28 (strain E24377A / ETEC).